Reading from the N-terminus, the 289-residue chain is Thymidylate synthase (289 aa).

Residues Arg21 and Arg150 to Arg151 each bind dUMP. Residue Cys170 is the Nucleophile of the active site. DUMP contacts are provided by residues Arg191–Asp194, Asn202, and His232–Tyr234. Asp194 provides a ligand contact to (6R)-5,10-methylene-5,6,7,8-tetrahydrofolate. Ala288 contacts (6R)-5,10-methylene-5,6,7,8-tetrahydrofolate.

The protein belongs to the thymidylate synthase family. Bacterial-type ThyA subfamily. As to quaternary structure, homodimer.

It is found in the cytoplasm. It carries out the reaction dUMP + (6R)-5,10-methylene-5,6,7,8-tetrahydrofolate = 7,8-dihydrofolate + dTMP. The protein operates within pyrimidine metabolism; dTTP biosynthesis. In terms of biological role, catalyzes the reductive methylation of 2'-deoxyuridine-5'-monophosphate (dUMP) to 2'-deoxythymidine-5'-monophosphate (dTMP) while utilizing 5,10-methylenetetrahydrofolate (mTHF) as the methyl donor and reductant in the reaction, yielding dihydrofolate (DHF) as a by-product. This enzymatic reaction provides an intracellular de novo source of dTMP, an essential precursor for DNA biosynthesis. The chain is Thymidylate synthase from Mycoplasmopsis synoviae (strain 53) (Mycoplasma synoviae).